The following is a 239-amino-acid chain: Protein UL20 homolog (239 aa).

The next 3 membrane-spanning stretches (helical) occupy residues 65 to 81, 140 to 156, and 189 to 208; these read PSFS…ALVI, FVIG…FMVV, and LMPL…STAV.

It belongs to the alphaherpesvirinae UL20 family. As to quaternary structure, interacts with gK (via N-terminus); this interaction plays a role in the coordinate transport of UL20 and gK to the trans-Golgi network (TGN), and is required for their cell surface expression. Interacts with gB.

Its subcellular location is the virion. It is found in the host cell membrane. It localises to the host endosome membrane. The protein localises to the host Golgi apparatus membrane. The protein resides in the host nucleus membrane. Functionally, plays an essential role in egress of virus particles from the nucleus, cytoplasmic envelopment and virus-induced cell fusion. Forms a functional protein complex with gK and this interaction is absolutely essential for their coordinate intracellular transport, gK glycosylation, expression on host cell surface, and function. Together, they modulate gB-mediated virus-induced cell fusion and virion egress and therefore actively participate in these processes. This chain is Protein UL20 homolog, found in Equus caballus (Horse).